The sequence spans 95 residues: Large ribosomal subunit protein uL23 (95 aa).

This sequence belongs to the universal ribosomal protein uL23 family. As to quaternary structure, part of the 50S ribosomal subunit. Contacts protein L29, and trigger factor when it is bound to the ribosome.

One of the early assembly proteins it binds 23S rRNA. One of the proteins that surrounds the polypeptide exit tunnel on the outside of the ribosome. Forms the main docking site for trigger factor binding to the ribosome. This Solibacter usitatus (strain Ellin6076) protein is Large ribosomal subunit protein uL23.